The following is a 1035-amino-acid chain: Kinesin-like protein KIN-4A (1035 aa).

The Kinesin motor domain occupies 11-370 (SVKVAVHIRP…LKYANRARNI (360 aa)). 90–97 (GQTGSGKT) contacts ATP. Coiled-coil stretches lie at residues 408-436 (CAEVQALKERIVWLETANEELCRELHEYR), 504-707 (QNSM…RKSS), and 881-911 (KEIVGLLRQSELRRKEAEKELKLREQAIATS). The disordered stretch occupies residues 704–724 (RKSSPREHSAGTNGFGTNGQT).

It belongs to the TRAFAC class myosin-kinesin ATPase superfamily. Kinesin family. KIN-4 subfamily. As to quaternary structure, homodimer. In terms of tissue distribution, expressed in stems and flowers. Detected in cells undergoing secondary wall deposition including developing interfascicular fibers and xylem cells, but also in dividing cells and expanding/elongating parenchyma cells.

Its subcellular location is the cytoplasm. It localises to the cytoskeleton. In terms of biological role, kinesin-like motor protein involved in the control of the oriented deposition of cellulose microfibrils. Its motor activity is directed toward the microtubule's plus end. It possesses the potential to drive long-distance transport of cargo along cortical microtubules. Regulates cell wall mechanics during cell elongation, by the regulation of primary and secondary walls deposition. Contributes to cortical microtubule-mediated trafficking of cell wall components. In Arabidopsis thaliana (Mouse-ear cress), this protein is Kinesin-like protein KIN-4A.